The sequence spans 189 residues: Development-specific protein LVN1.2 (189 aa).

Endoderm cells.

This Lytechinus variegatus (Green sea urchin) protein is Development-specific protein LVN1.2.